The primary structure comprises 394 residues: Elongation factor Tu (394 aa).

Residues lysine 10–glutamate 204 enclose the tr-type G domain. A G1 region spans residues glycine 19 to threonine 26. Glycine 19–threonine 26 is a GTP binding site. Threonine 26 lines the Mg(2+) pocket. Residues glycine 60–serine 64 are G2. Residues aspartate 81–glycine 84 are G3. Residues aspartate 81–histidine 85 and asparagine 136–aspartate 139 each bind GTP. Residues asparagine 136–aspartate 139 form a G4 region. The segment at serine 174–leucine 176 is G5.

The protein belongs to the TRAFAC class translation factor GTPase superfamily. Classic translation factor GTPase family. EF-Tu/EF-1A subfamily. As to quaternary structure, monomer.

It localises to the cytoplasm. The catalysed reaction is GTP + H2O = GDP + phosphate + H(+). In terms of biological role, GTP hydrolase that promotes the GTP-dependent binding of aminoacyl-tRNA to the A-site of ribosomes during protein biosynthesis. The chain is Elongation factor Tu from Alteromonas mediterranea (strain DSM 17117 / CIP 110805 / LMG 28347 / Deep ecotype).